The following is a 439-amino-acid chain: 3-phosphoshikimate 1-carboxyvinyltransferase (439 aa).

3-phosphoshikimate-binding residues include K29, S30, and R34. K29 serves as a coordination point for phosphoenolpyruvate. Residues G100 and R128 each contribute to the phosphoenolpyruvate site. 6 residues coordinate 3-phosphoshikimate: S173, S174, Q175, S201, D321, and K348. Q175 provides a ligand contact to phosphoenolpyruvate. The Proton acceptor role is filled by D321. Positions 352 and 395 each coordinate phosphoenolpyruvate.

It belongs to the EPSP synthase family. Monomer.

The protein resides in the cytoplasm. The enzyme catalyses 3-phosphoshikimate + phosphoenolpyruvate = 5-O-(1-carboxyvinyl)-3-phosphoshikimate + phosphate. The protein operates within metabolic intermediate biosynthesis; chorismate biosynthesis. In terms of biological role, catalyzes the transfer of the enolpyruvyl moiety of phosphoenolpyruvate (PEP) to the 5-hydroxyl of shikimate-3-phosphate (S3P) to produce enolpyruvyl shikimate-3-phosphate and inorganic phosphate. The sequence is that of 3-phosphoshikimate 1-carboxyvinyltransferase from Halobacterium salinarum (strain ATCC 700922 / JCM 11081 / NRC-1) (Halobacterium halobium).